The chain runs to 265 residues: Phosphonates import ATP-binding protein PhnC 1 (265 aa).

The region spanning 7–252 (IEVSNLSKSF…KLNEIYGTAA (246 aa)) is the ABC transporter domain. An ATP-binding site is contributed by 39 to 46 (GASGSGKS).

It belongs to the ABC transporter superfamily. Phosphonates importer (TC 3.A.1.9.1) family. As to quaternary structure, the complex is composed of two ATP-binding proteins (PhnC), two transmembrane proteins (PhnE) and a solute-binding protein (PhnD).

Its subcellular location is the cell inner membrane. It catalyses the reaction phosphonate(out) + ATP + H2O = phosphonate(in) + ADP + phosphate + H(+). In terms of biological role, part of the ABC transporter complex PhnCDE involved in phosphonates import. Responsible for energy coupling to the transport system. The polypeptide is Phosphonates import ATP-binding protein PhnC 1 (Nostoc sp. (strain PCC 7120 / SAG 25.82 / UTEX 2576)).